Here is a 590-residue protein sequence, read N- to C-terminus: Potassium-transporting ATPase potassium-binding subunit (590 aa).

12 consecutive transmembrane segments (helical) span residues 3-23 (AFLL…KPLG), 63-83 (HYAL…YALQ), 134-154 (GLAV…IALI), 177-197 (VYVL…QGVI), 284-304 (FVQM…FGGM), 312-332 (WAVL…LAWA), 359-379 (FGIV…CGAV), 388-408 (ALGG…FGGV), 411-431 (GLYG…LMIG), 451-471 (IAIL…VVVT), 515-535 (LALG…VLAM), and 558-578 (LFVV…YIPA).

It belongs to the KdpA family. In terms of assembly, the system is composed of three essential subunits: KdpA, KdpB and KdpC.

Its subcellular location is the cell inner membrane. Part of the high-affinity ATP-driven potassium transport (or Kdp) system, which catalyzes the hydrolysis of ATP coupled with the electrogenic transport of potassium into the cytoplasm. This subunit binds the periplasmic potassium ions and delivers the ions to the membrane domain of KdpB through an intramembrane tunnel. This chain is Potassium-transporting ATPase potassium-binding subunit, found in Ralstonia pickettii (strain 12J).